The sequence spans 747 residues: MSVHALRELFKHKGEKNYEVFSMEDFIGRLESEIGLNDSVVSQGRSLISSISHENFGTVQATDIQDAAAIYNKMQMLVNDYGFERVSSSDPQVRAREERVRENQITAATMAAIACADETKYIRALRGITKAKASNEDHVKVVQHQFNGPAGGIQVFENGVGLENYNEKSQRDFRVVTIGYNLAASRQDEFAERIYPTTVINPIEGGVVQVLPYIAVMKDVYHEVSGVKMDNEEVNMVEAYRDPSILDDESIALIPALDPAGSNADFFVDPALVPPYTIKNEQNLTITTAPLKANVRLDLMGNSNANLLIQRGMLEVSDTIDPAGRLKNLFVLLGGKVVKFKVDRLPRAVFQPDLVGDTRNAVIRFDSDDLVVSGDTTFIDGSADGVINDLKTAKLSLRLSVGFGGTISLSKGDSKFGATDTYVDKVLNEDGQVMDNADPAVKAILDQLTDLAVIGFELDTRFTNTNRRQRGHLLQTRALQFRHPIPMHAPVTLPMDTMTDEGPGEVVKALTVNTNIRNSNNAVKRMLNYLAQLREVVHNGYNRPKFGIIEGALSAVMRPTYRYKELDLEKVIDTIKSKDRWDDVCAAILNCVKAELFPAHRDSNIEAAFRVISGNQDETPMYLFCSDKEIANYLMTKGDDRTLGAYLKYDIVSTNNQLFDGKLVVIPTRAVQQENDILSWGQFFYVSTVIADLPITRGGHQVTREIAAIPFNLHVNNIPFALEFKITGFQKVMGETQFNGKLADLKP.

Homohexmer. Cleaved by the capsid maturation protease during capsid maturation.

The protein localises to the virion. In terms of biological role, capsid protein self-assembles to form an icosahedral capsid with a T=27 symmetry, about 120 nm in diameter, and consisting of 1560 capsid proteins. The capsid encapsulates the genomic DNA. The 12 pentameric vertices of the capsid are occupied by other proteins. The sequence is that of Major capsid protein from Pseudomonas phage phiKZ.